We begin with the raw amino-acid sequence, 74 residues long: Large ribosomal subunit protein bL31 (74 aa).

The protein belongs to the bacterial ribosomal protein bL31 family. Type A subfamily. As to quaternary structure, part of the 50S ribosomal subunit.

Its function is as follows. Binds the 23S rRNA. In Afipia carboxidovorans (strain ATCC 49405 / DSM 1227 / KCTC 32145 / OM5) (Oligotropha carboxidovorans), this protein is Large ribosomal subunit protein bL31.